We begin with the raw amino-acid sequence, 603 residues long: ABC transporter E family member 1 (603 aa).

4Fe-4S ferredoxin-type domains follow at residues 7 to 39 and 46 to 75; these read RIAI…KLCI and KSAF…IINL. 2 consecutive ABC transporter domains span residues 70-315 and 344-566; these read IQII…FLAG and VKSY…LSHL. ATP-binding positions include 110 to 117 and 381 to 388; these read GTNGIGKS and GENGTGKT.

Belongs to the ABC transporter superfamily. ABCE family. Expressed in roots, stems, leaves, flowers and siliques.

It is found in the membrane. In Arabidopsis thaliana (Mouse-ear cress), this protein is ABC transporter E family member 1 (ABCE1).